We begin with the raw amino-acid sequence, 201 residues long: Transgelin (201 aa).

N-acetylalanine is present on Ala-2. A Calponin-homology (CH) domain is found at 24-137; that stretch reads EELEERLVEW…RTLMALGSLA (114 aa). Ser-166 carries the post-translational modification Phosphoserine. The residue at position 172 (Lys-172) is an N6-acetyllysine. Residues 175–200 form a Calponin-like repeat; sequence IGLQMGSNRGASQAGMTGYGRPRQII. Position 181 is a phosphoserine (Ser-181). Position 183 is an omega-N-methylarginine (Arg-183).

The protein belongs to the calponin family.

The protein resides in the cytoplasm. Actin cross-linking/gelling protein. The chain is Transgelin (Tagln) from Mus musculus (Mouse).